Reading from the N-terminus, the 400-residue chain is Formate-dependent phosphoribosylglycinamide formyltransferase (400 aa).

Residues 22 to 23 (EL) and Glu-82 contribute to the N(1)-(5-phospho-beta-D-ribosyl)glycinamide site. ATP is bound by residues Arg-114, Lys-155, 160-165 (SSGKGQ), 195-198 (EGFV), and Glu-203. Positions 119–308 (RLAAEELGLS…EFALHARALL (190 aa)) constitute an ATP-grasp domain. The Mg(2+) site is built by Glu-267 and Glu-279. N(1)-(5-phospho-beta-D-ribosyl)glycinamide is bound by residues Asp-286, Lys-356, and 363-364 (RR).

It belongs to the PurK/PurT family. In terms of assembly, homodimer.

The enzyme catalyses N(1)-(5-phospho-beta-D-ribosyl)glycinamide + formate + ATP = N(2)-formyl-N(1)-(5-phospho-beta-D-ribosyl)glycinamide + ADP + phosphate + H(+). It participates in purine metabolism; IMP biosynthesis via de novo pathway; N(2)-formyl-N(1)-(5-phospho-D-ribosyl)glycinamide from N(1)-(5-phospho-D-ribosyl)glycinamide (formate route): step 1/1. Functionally, involved in the de novo purine biosynthesis. Catalyzes the transfer of formate to 5-phospho-ribosyl-glycinamide (GAR), producing 5-phospho-ribosyl-N-formylglycinamide (FGAR). Formate is provided by PurU via hydrolysis of 10-formyl-tetrahydrofolate. The polypeptide is Formate-dependent phosphoribosylglycinamide formyltransferase (Hahella chejuensis (strain KCTC 2396)).